The following is a 335-amino-acid chain: tRNA N6-adenosine threonylcarbamoyltransferase (335 aa).

A divalent metal cation contacts are provided by H109, H113, and Y130. Residues Y130–G134, D162, G177, E181, and N266 contribute to the substrate site. A divalent metal cation is bound at residue D294.

This sequence belongs to the KAE1 / TsaD family. Component of the EKC/KEOPS complex composed of at least GON7, TP53RK, TPRKB, OSGEP and LAGE3; the whole complex dimerizes. A divalent metal cation serves as cofactor.

It localises to the cytoplasm. The protein resides in the nucleus. The enzyme catalyses L-threonylcarbamoyladenylate + adenosine(37) in tRNA = N(6)-L-threonylcarbamoyladenosine(37) in tRNA + AMP + H(+). Its function is as follows. Component of the EKC/KEOPS complex that is required for the formation of a threonylcarbamoyl group on adenosine at position 37 (t(6)A37) in tRNAs that read codons beginning with adenine. The complex is probably involved in the transfer of the threonylcarbamoyl moiety of threonylcarbamoyl-AMP (TC-AMP) to the N6 group of A37. OSGEP likely plays a direct catalytic role in this reaction, but requires other protein(s) of the complex to fulfill this activity. This Bos taurus (Bovine) protein is tRNA N6-adenosine threonylcarbamoyltransferase.